A 419-amino-acid chain; its full sequence is Tyrosine--tRNA ligase 2 (419 aa).

Tyrosine 34 is a binding site for L-tyrosine. Residues 39–48 carry the 'HIGH' region motif; sequence PTGDSMHIGH. Residues tyrosine 168 and glutamine 172 each coordinate L-tyrosine. The short motif at 230-234 is the 'KMSKS' region element; that stretch reads KFGKS. Lysine 233 is an ATP binding site. In terms of domain architecture, S4 RNA-binding spans 352–418; that stretch reads KNIVEWLVDL…GKKNYSLVKL (67 aa).

This sequence belongs to the class-I aminoacyl-tRNA synthetase family. TyrS type 1 subfamily. As to quaternary structure, homodimer.

The protein localises to the cytoplasm. It carries out the reaction tRNA(Tyr) + L-tyrosine + ATP = L-tyrosyl-tRNA(Tyr) + AMP + diphosphate + H(+). Its function is as follows. Catalyzes the attachment of tyrosine to tRNA(Tyr) in a two-step reaction: tyrosine is first activated by ATP to form Tyr-AMP and then transferred to the acceptor end of tRNA(Tyr). This Bacillus cereus (strain ZK / E33L) protein is Tyrosine--tRNA ligase 2.